The primary structure comprises 294 residues: Elongation factor Ts (294 aa).

Residues 79-82 (TDFV) are involved in Mg(2+) ion dislocation from EF-Tu.

The protein belongs to the EF-Ts family.

It localises to the cytoplasm. Associates with the EF-Tu.GDP complex and induces the exchange of GDP to GTP. It remains bound to the aminoacyl-tRNA.EF-Tu.GTP complex up to the GTP hydrolysis stage on the ribosome. The sequence is that of Elongation factor Ts from Geobacillus thermodenitrificans (strain NG80-2).